A 30-amino-acid polypeptide reads, in one-letter code: ACLPNSCVSKGCCCGBSGYWCRQCGIKYTC.

Cystine bridges form between cysteine 2/cysteine 7, cysteine 12/cysteine 24, cysteine 13/cysteine 30, and cysteine 14/cysteine 21.

It is found in the secreted. Functionally, sillucin is an antimicrobial agent produced by the thermophilic fungus Rhizomucor pusillus in liquid culture; it is effective against Gram-positive bacteria at the level of RNA metabolism. The chain is Sillucin from Rhizomucor pusillus.